We begin with the raw amino-acid sequence, 129 residues long: D-ribose pyranase (129 aa).

His-20 serves as the catalytic Proton donor. Substrate contacts are provided by residues Asp-28, His-96, and Tyr-118–Asn-120.

Belongs to the RbsD / FucU family. RbsD subfamily. Homodecamer.

It is found in the cytoplasm. The catalysed reaction is beta-D-ribopyranose = beta-D-ribofuranose. Its pathway is carbohydrate metabolism; D-ribose degradation; D-ribose 5-phosphate from beta-D-ribopyranose: step 1/2. Functionally, catalyzes the interconversion of beta-pyran and beta-furan forms of D-ribose. The chain is D-ribose pyranase from Shouchella clausii (strain KSM-K16) (Alkalihalobacillus clausii).